A 457-amino-acid polypeptide reads, in one-letter code: tRNA modification GTPase MnmE (457 aa).

(6S)-5-formyl-5,6,7,8-tetrahydrofolate-binding residues include arginine 25, glutamate 87, and arginine 126. The TrmE-type G domain occupies 223-377; that stretch reads GISTAIIGRP…IEERINNLFF (155 aa). Asparagine 233 is a binding site for K(+). GTP contacts are provided by residues 233–238, 252–258, and 277–280; these read NVGKSS, TDIAGTT, and DTAG. Serine 237 lines the Mg(2+) pocket. Residues threonine 252, isoleucine 254, and threonine 257 each coordinate K(+). Threonine 258 lines the Mg(2+) pocket. Lysine 457 is a (6S)-5-formyl-5,6,7,8-tetrahydrofolate binding site.

The protein belongs to the TRAFAC class TrmE-Era-EngA-EngB-Septin-like GTPase superfamily. TrmE GTPase family. As to quaternary structure, homodimer. Heterotetramer of two MnmE and two MnmG subunits. K(+) serves as cofactor.

The protein localises to the cytoplasm. Its function is as follows. Exhibits a very high intrinsic GTPase hydrolysis rate. Involved in the addition of a carboxymethylaminomethyl (cmnm) group at the wobble position (U34) of certain tRNAs, forming tRNA-cmnm(5)s(2)U34. The polypeptide is tRNA modification GTPase MnmE (Streptococcus pneumoniae (strain Hungary19A-6)).